The chain runs to 104 residues: Conantokin-P (104 aa).

The signal sequence occupies residues 1–26; that stretch reads MQLYTYLYLLVPLVTFHLILSTGTLA. Residues 27–80 constitute a propeptide that is removed on maturation; it reads HGGTLTERRSTDTTALKPEPVLLQKSDARSTDDNDKDRLTQMKRILKKRGNKAR. A disordered region spans residues 29–87; it reads GTLTERRSTDTTALKPEPVLLQKSDARSTDDNDKDRLTQMKRILKKRGNKARGEEEHSK. Over residues 52–66 the composition is skewed to basic and acidic residues; the sequence is SDARSTDDNDKDRLT. 5 positions are modified to 4-carboxyglutamate: glutamate 83, glutamate 84, glutamate 90, glutamate 94, and glutamate 103. Residues glutamate 90 and glutamate 94 each coordinate a divalent metal cation. Cysteine 91 and cysteine 104 form a disulfide bridge.

Belongs to the conotoxin B superfamily. As to expression, expressed by the venom duct.

Its subcellular location is the secreted. In terms of biological role, conantokins inhibit N-methyl-D-aspartate (NMDA) receptors. This toxin has the highest potency for the NR2B/GRIN2B subunit, followed by NR2A/GRIN2A, NR2C/GRIN2C, and NR2D/GRIN2D subunits. The protein is Conantokin-P of Conus purpurascens (Purple cone).